Consider the following 251-residue polypeptide: Aspartate/glutamate leucyltransferase (251 aa).

This sequence belongs to the R-transferase family. Bpt subfamily.

The protein localises to the cytoplasm. The enzyme catalyses N-terminal L-glutamyl-[protein] + L-leucyl-tRNA(Leu) = N-terminal L-leucyl-L-glutamyl-[protein] + tRNA(Leu) + H(+). It carries out the reaction N-terminal L-aspartyl-[protein] + L-leucyl-tRNA(Leu) = N-terminal L-leucyl-L-aspartyl-[protein] + tRNA(Leu) + H(+). Its function is as follows. Functions in the N-end rule pathway of protein degradation where it conjugates Leu from its aminoacyl-tRNA to the N-termini of proteins containing an N-terminal aspartate or glutamate. In Xanthomonas euvesicatoria pv. vesicatoria (strain 85-10) (Xanthomonas campestris pv. vesicatoria), this protein is Aspartate/glutamate leucyltransferase.